A 368-amino-acid chain; its full sequence is tRNA-specific 2-thiouridylase MnmA (368 aa).

Residues 11-18 (GMSGGVDS) and methionine 37 contribute to the ATP site. The tract at residues 97–99 (NPD) is interaction with target base in tRNA. Cysteine 102 acts as the Nucleophile in catalysis. The cysteines at positions 102 and 199 are disulfide-linked. Glycine 127 is a binding site for ATP. The segment at 149 to 151 (KDQ) is interaction with tRNA. Cysteine 199 (cysteine persulfide intermediate) is an active-site residue. The interval 311 to 312 (RY) is interaction with tRNA.

Belongs to the MnmA/TRMU family. In terms of assembly, interacts with TusE.

The protein localises to the cytoplasm. The enzyme catalyses S-sulfanyl-L-cysteinyl-[protein] + uridine(34) in tRNA + AH2 + ATP = 2-thiouridine(34) in tRNA + L-cysteinyl-[protein] + A + AMP + diphosphate + H(+). Functionally, catalyzes the 2-thiolation of uridine at the wobble position (U34) of tRNA(Lys), tRNA(Glu) and tRNA(Gln), leading to the formation of s(2)U34, the first step of tRNA-mnm(5)s(2)U34 synthesis. Sulfur is provided by IscS, via a sulfur-relay system. Binds ATP and its substrate tRNAs. This chain is tRNA-specific 2-thiouridylase MnmA, found in Shigella boydii serotype 4 (strain Sb227).